The chain runs to 238 residues: Ubiquinone biosynthesis O-methyltransferase (238 aa).

Residues Arg40, Gly59, Asp80, and Met125 each contribute to the S-adenosyl-L-methionine site.

The protein belongs to the methyltransferase superfamily. UbiG/COQ3 family.

It catalyses the reaction a 3-demethylubiquinol + S-adenosyl-L-methionine = a ubiquinol + S-adenosyl-L-homocysteine + H(+). It carries out the reaction a 3-(all-trans-polyprenyl)benzene-1,2-diol + S-adenosyl-L-methionine = a 2-methoxy-6-(all-trans-polyprenyl)phenol + S-adenosyl-L-homocysteine + H(+). It functions in the pathway cofactor biosynthesis; ubiquinone biosynthesis. In terms of biological role, O-methyltransferase that catalyzes the 2 O-methylation steps in the ubiquinone biosynthetic pathway. The protein is Ubiquinone biosynthesis O-methyltransferase of Paracidovorax citrulli (strain AAC00-1) (Acidovorax citrulli).